The sequence spans 304 residues: Cell surface-binding protein OPG105 (304 aa).

The protein belongs to the alpha-carbonic anhydrase family. As to quaternary structure, homodimer; disulfide-linked. Apparently non-glycosylated.

It is found in the virion membrane. Its function is as follows. Binds to chondroitin sulfate on the cell surface to provide virion attachment to target cell. The chain is Cell surface-binding protein OPG105 (OPG105) from Monkeypox virus.